Reading from the N-terminus, the 1349-residue chain is Protein turtle homolog B (1349 aa).

A signal peptide spans 1–20; sequence MIWYVATFIASVIGTRGLAA. Topologically, residues 21–722 are extracellular; the sequence is EGAHGLREEP…DLTEDGLARP (702 aa). 5 Ig-like domains span residues 24 to 129, 139 to 226, 228 to 320, 324 to 415, and 420 to 504; these read HGLR…HNGS, PTFT…LLVQ, PPFI…AYLT, PARV…ARLV, and PYFT…THLT. 2 disulfide bridges follow: C45-C113 and C161-C208. N241 and N258 each carry an N-linked (GlcNAc...) asparagine glycan. 3 disulfide bridges follow: C250–C303, C346–C397, and C442–C488. 2 consecutive Fibronectin type-III domains span residues 512 to 604 and 614 to 708; these read APGS…TLAF and LVTP…STDI. The N-linked (GlcNAc...) asparagine glycan is linked to N624. Residues 723-743 form a helical membrane-spanning segment; sequence VLAGIVATICFLAAAILFSTL. Over 744–1349 the chain is Cytoplasmic; sequence AACFVNKQRK…SPPERALSKL (606 aa). Disordered regions lie at residues 758–817, 911–1081, and 1099–1349; these read RKKD…EKEL, QLTP…RGLP, and APKG…LSKL. Phosphoserine occurs at positions 775, 783, and 794. Residues 911 to 921 show a composition bias toward polar residues; the sequence is QLTPLSSSQES. Over residues 985–998 the composition is skewed to low complexity; the sequence is VPEVGSPLSSVMSS. Polar residues-rich tracts occupy residues 1018 to 1033, 1129 to 1141, and 1199 to 1214; these read ENASNSTLPLTQTPTG, LVSQGQLRHTSQG, and SRLSPLTQSPLSSRTG. R1136 bears the Omega-N-methylarginine mark. A phosphoserine mark is found at S1207 and S1215. A compositionally biased stretch (low complexity) spans 1251–1271; the sequence is STPSTGSPSQSSRSGSPSYRP. Over residues 1283 to 1292 the composition is skewed to pro residues; it reads PSPPPGPAPA.

The protein belongs to the immunoglobulin superfamily. Turtle family. As to quaternary structure, found in a complex with MAGI2 and NLGN2, where it interacts with MAGI2 (via PDZ 5 and PDZ 6 domains). In terms of processing, N-glycosylated and sialylated. Not significantly O-glycosylated.

It localises to the postsynaptic cell membrane. Its subcellular location is the postsynaptic density. Transmembrane protein which is abundantly expressed in interneurons, where it may regulate inhibitory synapse development. May mediate homophilic cell adhesion. The polypeptide is Protein turtle homolog B (IGSF9B) (Homo sapiens (Human)).